Consider the following 164-residue polypeptide: ATP synthase subunit b (164 aa).

Residues 4–24 form a helical membrane-spanning segment; that stretch reads LGINPTLFIAQLINFLLLIFI.

Belongs to the ATPase B chain family. In terms of assembly, F-type ATPases have 2 components, F(1) - the catalytic core - and F(0) - the membrane proton channel. F(1) has five subunits: alpha(3), beta(3), gamma(1), delta(1), epsilon(1). F(0) has four main subunits: a(1), b(2) and c(10-14). The alpha and beta chains form an alternating ring which encloses part of the gamma chain. F(1) is attached to F(0) by a central stalk formed by the gamma and epsilon chains, while a peripheral stalk is formed by the delta and b chains.

The protein resides in the cell membrane. F(1)F(0) ATP synthase produces ATP from ADP in the presence of a proton or sodium gradient. F-type ATPases consist of two structural domains, F(1) containing the extramembraneous catalytic core and F(0) containing the membrane proton channel, linked together by a central stalk and a peripheral stalk. During catalysis, ATP synthesis in the catalytic domain of F(1) is coupled via a rotary mechanism of the central stalk subunits to proton translocation. Functionally, component of the F(0) channel, it forms part of the peripheral stalk, linking F(1) to F(0). The sequence is that of ATP synthase subunit b from Chloroflexus aurantiacus (strain ATCC 29366 / DSM 635 / J-10-fl).